Here is a 722-residue protein sequence, read N- to C-terminus: Zinc finger BED domain-containing protein RICESLEEPER 2 (722 aa).

Residues 66 to 134 (RKKSLVWEHF…QEHKLALTPA (69 aa)) form a BED-type zinc finger. Residues Cys89, Cys92, His113, and His127 each coordinate Zn(2+). The interval 572 to 592 (VEQGDGNNAPASENGTQATAP) is disordered. Residues 576 to 592 (DGNNAPASENGTQATAP) show a composition bias toward polar residues. The HATC (Hobo-Ac-Tam3) domain stretch occupies residues 617 to 702 (ELEQYLDESL…EALVCAKDWL (86 aa)).

Homodimer.

Its subcellular location is the nucleus. Functionally, transposase-like protein that is essential for plant growth and development. May regulate global gene expression by recruiting other cellular factors. The polypeptide is Zinc finger BED domain-containing protein RICESLEEPER 2 (Oryza sativa subsp. japonica (Rice)).